A 661-amino-acid polypeptide reads, in one-letter code: Pseudouridylate synthase 7 homolog (661 aa).

M1 carries the N-acetylmethionine modification. Residues 1–97 are disordered; sequence MEMTEMTGVS…GLSEECEEEE (97 aa). S10 is subject to Phosphoserine. Residues 36–52 are compositionally biased toward polar residues; that stretch reads SECSLTKGQDGLQNDFL. Over residues 77–97 the composition is skewed to acidic residues; that stretch reads QLEDEEEEEEDGLSEECEEEE. Phosphoserine is present on S127. D294 (nucleophile) is an active-site residue. Residues 370–580 enclose the TRUD domain; it reads GFINYYGMQR…SGAYRKIIIR (211 aa). T610 bears the Phosphothreonine mark.

Belongs to the pseudouridine synthase TruD family. As to quaternary structure, interacts with SIRT1.

It is found in the nucleus. It catalyses the reaction a uridine in tRNA = a pseudouridine in tRNA. The catalysed reaction is uridine(13) in tRNA = pseudouridine(13) in tRNA. The enzyme catalyses a uridine in mRNA = a pseudouridine in mRNA. In terms of biological role, pseudouridylate synthase that catalyzes pseudouridylation of RNAs. Acts as a regulator of protein synthesis in embryonic stem cells by mediating pseudouridylation of RNA fragments derived from tRNAs (tRFs): pseudouridylated tRFs inhibit translation by targeting the translation initiation complex. Also catalyzes pseudouridylation of mRNAs: mediates pseudouridylation of mRNAs with the consensus sequence 5'-UGUAG-3'. Acts as a regulator of pre-mRNA splicing by mediating pseudouridylation of pre-mRNAs at locations associated with alternatively spliced regions. Pseudouridylation of pre-mRNAs near splice sites directly regulates mRNA splicing and mRNA 3'-end processing. In addition to mRNAs and tRNAs, binds other types of RNAs, such as snRNAs, Y RNAs and vault RNAs, suggesting that it can catalyze pseudouridylation of many RNA types. The polypeptide is Pseudouridylate synthase 7 homolog (Homo sapiens (Human)).